Consider the following 331-residue polypeptide: Phenylalanine--tRNA ligase alpha subunit (331 aa).

Position 252 (Glu-252) interacts with Mg(2+).

The protein belongs to the class-II aminoacyl-tRNA synthetase family. Phe-tRNA synthetase alpha subunit type 1 subfamily. Tetramer of two alpha and two beta subunits. The cofactor is Mg(2+).

It localises to the cytoplasm. It carries out the reaction tRNA(Phe) + L-phenylalanine + ATP = L-phenylalanyl-tRNA(Phe) + AMP + diphosphate + H(+). The protein is Phenylalanine--tRNA ligase alpha subunit of Xanthomonas axonopodis pv. citri (strain 306).